We begin with the raw amino-acid sequence, 429 residues long: Glutamate-1-semialdehyde 2,1-aminomutase 1 (429 aa).

K268 carries the post-translational modification N6-(pyridoxal phosphate)lysine.

Belongs to the class-III pyridoxal-phosphate-dependent aminotransferase family. HemL subfamily. Homodimer. Pyridoxal 5'-phosphate is required as a cofactor.

It localises to the cytoplasm. The enzyme catalyses (S)-4-amino-5-oxopentanoate = 5-aminolevulinate. It functions in the pathway porphyrin-containing compound metabolism; protoporphyrin-IX biosynthesis; 5-aminolevulinate from L-glutamyl-tRNA(Glu): step 2/2. This Staphylococcus saprophyticus subsp. saprophyticus (strain ATCC 15305 / DSM 20229 / NCIMB 8711 / NCTC 7292 / S-41) protein is Glutamate-1-semialdehyde 2,1-aminomutase 1.